Consider the following 295-residue polypeptide: Ethanolamine ammonia-lyase small subunit (295 aa).

Residues Val208 and Glu229 each coordinate adenosylcob(III)alamin.

It belongs to the EutC family. In terms of assembly, the basic unit is a heterodimer which dimerizes to form tetramers. The heterotetramers trimerize; 6 large subunits form a core ring with 6 small subunits projecting outwards. Requires adenosylcob(III)alamin as cofactor.

Its subcellular location is the bacterial microcompartment. The catalysed reaction is ethanolamine = acetaldehyde + NH4(+). Its pathway is amine and polyamine degradation; ethanolamine degradation. Catalyzes the deamination of various vicinal amino-alcohols to oxo compounds. Allows this organism to utilize ethanolamine as the sole source of nitrogen and carbon in the presence of external vitamin B12. In Fusobacterium nucleatum subsp. nucleatum (strain ATCC 25586 / DSM 15643 / BCRC 10681 / CIP 101130 / JCM 8532 / KCTC 2640 / LMG 13131 / VPI 4355), this protein is Ethanolamine ammonia-lyase small subunit.